The chain runs to 149 residues: Large ribosomal subunit protein uL15 (149 aa).

The interval 1 to 64 (MVELHDLQPH…GQTPLYMRIP (64 aa)) is disordered. The segment covering 31–40 (TAGRGHKGQK) has biased composition (basic residues).

It belongs to the universal ribosomal protein uL15 family. In terms of assembly, part of the 50S ribosomal subunit.

Functionally, binds to the 23S rRNA. This chain is Large ribosomal subunit protein uL15, found in Aquifex aeolicus (strain VF5).